We begin with the raw amino-acid sequence, 278 residues long: Pantothenate synthetase (278 aa).

30–37 (MGGLHQGH) is a binding site for ATP. His-37 (proton donor) is an active-site residue. Residue Gln-61 participates in (R)-pantoate binding. A beta-alanine-binding site is contributed by Gln-61. 146 to 149 (GQKD) contributes to the ATP binding site. Gln-152 provides a ligand contact to (R)-pantoate. ATP-binding positions include Ile-175 and 183 to 186 (MSTR).

It belongs to the pantothenate synthetase family. Homodimer.

The protein resides in the cytoplasm. It catalyses the reaction (R)-pantoate + beta-alanine + ATP = (R)-pantothenate + AMP + diphosphate + H(+). Its pathway is cofactor biosynthesis; (R)-pantothenate biosynthesis; (R)-pantothenate from (R)-pantoate and beta-alanine: step 1/1. In terms of biological role, catalyzes the condensation of pantoate with beta-alanine in an ATP-dependent reaction via a pantoyl-adenylate intermediate. This Ruthia magnifica subsp. Calyptogena magnifica protein is Pantothenate synthetase.